Here is a 466-residue protein sequence, read N- to C-terminus: MRGAYSVITALLVVASSQIAAESDYQLQVYHHDVTVAGNAVVKSLPKRYLRGSQHVHDSNEERSVYSVLASMINEGVSKMPQAAEAVEKMPQAAEAVKKMPHAATAGKKVSRVTRTGKKMTSHGANARKGPLRADFVEKMPHAAEAKEEMQRANQHDLLKAIHQADEALEKSWHPSSDTAAIRYASHGISSNVILTLKEWRKNFRGMREMAVSSEHKDIIKPIHKAFVRLCGENMDPTTIEMSHIWNMMDWNVAASPATSHRQNLVSQAQRYVLIGLRSMKKDPAVWKEWNKLSKSLRFGVLDYLLNLHYQRWVRMYNIFKRHRPDKWDVPMNDKLSLDGNTDTNSALALQTHSNKQSLYPNEPSNAAWTSKGDRFVSSKRSRRTFNGNTDTASLPSKRSKVRSSKSFVPLSTESTTFGDHSVSTKTSRVSAVAPPKRPKAHNLDVLASAATALALKDSEFVMHES.

Positions 1–21 are cleaved as a signal peptide; the sequence is MRGAYSVITALLVVASSQIAA. The RxLR-dEER motif lies at 48 to 63; that stretch reads RYLRGSQHVHDSNEER. 2 disordered regions span residues 99–127 and 384–405; these read KMPH…GANA and RTFN…VRSS. The segment covering 109–121 has biased composition (basic residues); the sequence is KVSRVTRTGKKMT. Residues 385 to 395 show a composition bias toward polar residues; sequence TFNGNTDTASL.

It belongs to the RxLR effector family.

It localises to the secreted. The protein localises to the host nucleus. Functionally, secreted effector that partially suppresses the host cell death induced by cell death-inducing proteins. The polypeptide is Secreted RxLR effector protein 101 (Plasmopara viticola (Downy mildew of grapevine)).